Consider the following 662-residue polypeptide: Acyl-coenzyme A oxidase acox-1.4 (662 aa).

FAD-binding positions include 148–151, 156–157, and G190; these read YAQT and GT. Substrate contacts are provided by residues 284-287 and R294; that span reads KVNH. Residues R319 and 339 to 342 each bind FAD; that span reads QQHR. ATP contacts are provided by H341, S391, H395, and Q403. G410 contributes to the FAD binding site. 432–433 provides a ligand contact to substrate; that stretch reads YE. Residue E433 is the Proton acceptor of the active site. Residue E435 coordinates FAD. ATP is bound by residues 526–529 and Y574; that span reads RASR. Residues 660–662 carry the Microbody targeting signal motif; it reads AKL.

The protein belongs to the acyl-CoA oxidase family. In terms of assembly, homodimer. FAD serves as cofactor.

It localises to the peroxisome. The catalysed reaction is asc-C9-CoA + O2 = asc-DeltaC9-CoA + H2O2. Its pathway is lipid metabolism; peroxisomal fatty acid beta-oxidation. Activated by ATP. ATP binding leads to a conformational change that promotes FAD cofactor binding and enzyme activity. ATP binding likely occurs during acox-1.4 folding and/or dimer formation. In terms of biological role, involved in the first step of peroxisomal beta-oxidation by catalyzing the desaturation of fatty acid-derived side chains of ascaroside pheromones, which regulates development and behavior. Specifically, shortens ascarosides with a 9-carbon side chain (asc-C9) and, in association with acox-1.1, may contribute to the shortening of ascarosides with a 11-carbon side chain (asc-C11). May contribute to the production of indol-3-carbonyl(IC)-ascarosides in association with acox-1.1 and acox-3. The protein is Acyl-coenzyme A oxidase acox-1.4 of Caenorhabditis elegans.